A 308-amino-acid chain; its full sequence is MTSDDTAQPSGARRIETRPDLTAAQKDAVLALLDEAAQVDGQQAVSEQGRLQLRGGPREGVRHLLLSVGEDLVGYAQLEDNDPVEAPAAELVVHPSHRGHGHGRALGSALLAESGKRLRVWAHGGHSAARHLAQVLGLTLFRELRQMRRSLTDFDPAEPVLPEGVTVRAFVPGEDDAAWLAANAEAFAHHPEQGSLTQRDLDDRKGEPWFDPAGFFLAFRGEELVGFHWTKAHAAEQLGEVYVVGVRPGAQGGGLGKALTTIGLRHLAAQGLPTAMLYVDADNKAAVTVYERLGFVTYETDLMYRSET.

Residues 1-20 (MTSDDTAQPSGARRIETRPD) are disordered. N-acetyltransferase domains lie at 15-152 (IETR…RSLT) and 165-308 (VTVR…RSET). Glutamate 47 contributes to the 1D-myo-inositol 2-(L-cysteinylamino)-2-deoxy-alpha-D-glucopyranoside binding site. 91–93 (LVV) is a binding site for acetyl-CoA. Positions 192, 231, and 240 each coordinate 1D-myo-inositol 2-(L-cysteinylamino)-2-deoxy-alpha-D-glucopyranoside. Acetyl-CoA-binding positions include 244–246 (VGV) and 251–257 (QGGGLGK). Tyrosine 278 contacts 1D-myo-inositol 2-(L-cysteinylamino)-2-deoxy-alpha-D-glucopyranoside.

Belongs to the acetyltransferase family. MshD subfamily. In terms of assembly, monomer.

The enzyme catalyses 1D-myo-inositol 2-(L-cysteinylamino)-2-deoxy-alpha-D-glucopyranoside + acetyl-CoA = mycothiol + CoA + H(+). Functionally, catalyzes the transfer of acetyl from acetyl-CoA to desacetylmycothiol (Cys-GlcN-Ins) to form mycothiol. The protein is Mycothiol acetyltransferase of Streptomyces scabiei (strain 87.22).